Here is a 179-residue protein sequence, read N- to C-terminus: Large ribosomal subunit protein uL5 (179 aa).

It belongs to the universal ribosomal protein uL5 family. As to quaternary structure, part of the 50S ribosomal subunit; part of the 5S rRNA/L5/L18/L25 subcomplex. Contacts the 5S rRNA and the P site tRNA. Forms a bridge to the 30S subunit in the 70S ribosome.

In terms of biological role, this is one of the proteins that bind and probably mediate the attachment of the 5S RNA into the large ribosomal subunit, where it forms part of the central protuberance. In the 70S ribosome it contacts protein S13 of the 30S subunit (bridge B1b), connecting the 2 subunits; this bridge is implicated in subunit movement. Contacts the P site tRNA; the 5S rRNA and some of its associated proteins might help stabilize positioning of ribosome-bound tRNAs. This chain is Large ribosomal subunit protein uL5, found in Natranaerobius thermophilus (strain ATCC BAA-1301 / DSM 18059 / JW/NM-WN-LF).